We begin with the raw amino-acid sequence, 595 residues long: E3 ubiquitin-protein ligase synoviolin B (595 aa).

A helical transmembrane segment spans residues 1–19; it reads MTGASLALTASVVAHAYYL. Residues 20 to 35 are Lumenal-facing; it reads KNQFYPTVVYLTKSSP. The helical transmembrane segment at 36-56 threads the bilayer; that stretch reads SMAILYIQAFVLVFLLGKFMG. Residues 57–92 are Cytoplasmic-facing; sequence KVFFGQLRAAEMEHLLERSWYAVTETCLAFTVFRDD. A helical transmembrane segment spans residues 93–113; it reads FSPRFVALFTLLLFLKCFHWL. Topologically, residues 114 to 129 are lumenal; the sequence is AEDRVDFMERSPNISW. The chain crosses the membrane as a helical span at residues 130 to 150; sequence LFHFRILALMLLLGVLDAFFV. The Cytoplasmic segment spans residues 151 to 163; sequence SHAYNSLVTRGAS. Residues 164 to 184 traverse the membrane as a helical segment; it reads VQLVFGFEYAILMTMILAVFI. At 185 to 218 the chain is on the lumenal side; sequence KYILHSVDLQSENPWDNKAVYMLYTELFTGFIKV. The chain crosses the membrane as a helical span at residues 219-239; the sequence is LLYMAFMTIMVKVHTFPLFAI. Residues 230–264 form an interaction with p53/TP53 region; the sequence is KVHTFPLFAIRPMYLAMRQFKKAVTDAVMSRRAIR. At 240 to 595 the chain is on the cytoplasmic side; sequence RPMYLAMRQF…LQKLETTDSQ (356 aa). Residues cysteine 285, cysteine 288, cysteine 301, histidine 303, histidine 306, cysteine 309, cysteine 320, and cysteine 323 each contribute to the Zn(2+) site. The RING-type; atypical zinc-finger motif lies at 285–324; sequence CIICREEMVSGAKRLPCNHIFHTSCLRSWFQRQQTCPTCR. Positions 335-353 are enriched in low complexity; it reads QPQTPAEQQNQHQAQQQPT. Disordered regions lie at residues 335-370 and 386-426; these read QPQT…LPPF and PVPG…PGAA. A compositionally biased stretch (pro residues) spans 354–370; it reads PVVPPQPNFPPGMLPPF. The segment covering 390–408 has biased composition (low complexity); it reads APVGNPPDEANPGSSSGSS. Residues 463–494 are a coiled coil; that stretch reads EELRAMEGHERQNLEARLQCLQNIHTLLDAAM. Residues 509 to 595 form a disordered region; the sequence is PPQPPVSSSS…LQKLETTDSQ (87 aa). Residues 514–552 show a composition bias toward low complexity; sequence VSSSSSSSASASTEPTTSSVSEPVIDTSSIVTTDSSQQS.

It belongs to the HRD1 family. In terms of assembly, homodimer.

The protein resides in the endoplasmic reticulum membrane. It carries out the reaction S-ubiquitinyl-[E2 ubiquitin-conjugating enzyme]-L-cysteine + [acceptor protein]-L-lysine = [E2 ubiquitin-conjugating enzyme]-L-cysteine + N(6)-ubiquitinyl-[acceptor protein]-L-lysine.. The protein operates within protein modification; protein ubiquitination. Its function is as follows. E3 ubiquitin-protein ligase which accepts ubiquitin specifically from endoplasmic reticulum-associated UBC7 E2 ligase and transfers it to substrates, promoting their degradation. Component of the endoplasmic reticulum quality control (ERQC) system also called ER-associated degradation (ERAD) involved in ubiquitin-dependent degradation of misfolded endoplasmic reticulum proteins. Also promotes the degradation of normal but naturally short-lived proteins. Protects cells from ER stress-induced apoptosis. Sequesters p53 in the cytoplasm and promotes its degradation, thereby negatively regulating its biological function in transcription, cell cycle regulation and apoptosis. In Xenopus laevis (African clawed frog), this protein is E3 ubiquitin-protein ligase synoviolin B (syvn1-b).